A 144-amino-acid polypeptide reads, in one-letter code: Universal stress protein A homolog 1 (144 aa).

Belongs to the universal stress protein A family. Homodimer.

The protein resides in the cytoplasm. Involved in stress response. The sequence is that of Universal stress protein A homolog 1 (uspA1) from Coxiella burnetii (strain RSA 493 / Nine Mile phase I).